The primary structure comprises 193 residues: Phosphoheptose isomerase (193 aa).

The SIS domain occupies 37–193; sequence LADSFKAGGK…MLIEKEMAKG (157 aa). Position 52 to 54 (52 to 54) interacts with substrate; the sequence is NGG. Zn(2+)-binding residues include His61 and Glu65. Residues Glu65, 93-94, 119-121, Ser124, and Gln172 contribute to the substrate site; these read ND and STS. Zn(2+) contacts are provided by Gln172 and His180.

Belongs to the SIS family. GmhA subfamily. In terms of assembly, homotetramer. Zn(2+) is required as a cofactor.

The protein localises to the cytoplasm. The enzyme catalyses 2 D-sedoheptulose 7-phosphate = D-glycero-alpha-D-manno-heptose 7-phosphate + D-glycero-beta-D-manno-heptose 7-phosphate. Its pathway is carbohydrate biosynthesis; D-glycero-D-manno-heptose 7-phosphate biosynthesis; D-glycero-alpha-D-manno-heptose 7-phosphate and D-glycero-beta-D-manno-heptose 7-phosphate from sedoheptulose 7-phosphate: step 1/1. Functionally, catalyzes the isomerization of sedoheptulose 7-phosphate in D-glycero-D-manno-heptose 7-phosphate. This Klebsiella pneumoniae subsp. pneumoniae (strain ATCC 700721 / MGH 78578) protein is Phosphoheptose isomerase.